Here is a 269-residue protein sequence, read N- to C-terminus: Tetrahydromethanopterin S-methyltransferase subunit C (269 aa).

Transmembrane regions (helical) follow at residues 18-38, 39-59, 62-82, 84-104, 106-126, 152-172, 180-200, and 222-242; these read VLVIGAVLSLIGMYIAHFVPS, LAMLLGGLLAAGACVAGANTT, VAAYGLGTGVPSIGMVSLGMG, ISALAGVLIPSVLAGSVALPF, LVLATPIIAAVVAIIVGFIVG, ALAILGFCTAFAGGFSADLII, IIALAFIAAGMSILHPFNACI, and LVFSIAKLDIVSILVAAVFWI.

The protein belongs to the MtrC family. The complex is composed of 8 subunits; MtrA, MtrB, MtrC, MtrD, MtrE, MtrF, MtrG and MtrH.

It localises to the cell membrane. The catalysed reaction is 5-methyl-5,6,7,8-tetrahydromethanopterin + coenzyme M + 2 Na(+)(in) = 5,6,7,8-tetrahydromethanopterin + methyl-coenzyme M + 2 Na(+)(out). It functions in the pathway one-carbon metabolism; methanogenesis from CO(2); methyl-coenzyme M from 5,10-methylene-5,6,7,8-tetrahydromethanopterin: step 2/2. Part of a complex that catalyzes the formation of methyl-coenzyme M and tetrahydromethanopterin from coenzyme M and methyl-tetrahydromethanopterin. This is an energy-conserving, sodium-ion translocating step. This chain is Tetrahydromethanopterin S-methyltransferase subunit C, found in Methanococcus vannielii (strain ATCC 35089 / DSM 1224 / JCM 13029 / OCM 148 / SB).